The following is a 587-amino-acid chain: Arginine--tRNA ligase (587 aa).

A 'HIGH' region motif is present at residues 127–137; the sequence is PNLAKEMHVGH.

This sequence belongs to the class-I aminoacyl-tRNA synthetase family. In terms of assembly, monomer.

The protein localises to the cytoplasm. It catalyses the reaction tRNA(Arg) + L-arginine + ATP = L-arginyl-tRNA(Arg) + AMP + diphosphate. This chain is Arginine--tRNA ligase, found in Pseudomonas aeruginosa (strain LESB58).